Reading from the N-terminus, the 342-residue chain is MVQTSRHRRSTRGSKMVSWSVMAKIQEILQKKMVREFLAEFMSTYVMMVFGLGSVAHMVLNKKYGSYLGVNLGFGFGVTMGVHVAGHISGAHMNAAVTFANCALGRVPWRKFPVYVLGQFLGSFLAAATIYTLFYTAILHFSGGQLMVTGPVATAGIFATYLPDHMTLWRGFLNEAWLTGMLQLCLFAITDQENNAALPGTQALVIGILVVIIGVSLGMNTGYAINPSRDLPPRVFTFIAGWGKEVFSEGENWWWVPVVAPLLGACLGGIIYLVFIGSTTPREPLKLEDSVAYEDHGITVLPKMGSHEPTISPLTPVSVSPANRSSVRPAPPLHESMALGHF.

Topologically, residues 1–36 are cytoplasmic; the sequence is MVQTSRHRRSTRGSKMVSWSVMAKIQEILQKKMVRE. Residue serine 20 is modified to Phosphoserine. The chain crosses the membrane as a helical span at residues 37-54; the sequence is FLAEFMSTYVMMVFGLGS. The Extracellular portion of the chain corresponds to 55-67; the sequence is VAHMVLNKKYGSY. Residues 68–85 form a helical membrane-spanning segment; it reads LGVNLGFGFGVTMGVHVA. The Cytoplasmic portion of the chain corresponds to 86 to 89; the sequence is GHIS. Positions 90-103 form an intramembrane region, discontinuously helical; sequence GAHMNAAVTFANCA. Positions 94–96 match the NPA 1 motif; that stretch reads NAA. Residues 104 to 111 are Cytoplasmic-facing; the sequence is LGRVPWRK. Residues 112–132 form a helical membrane-spanning segment; that stretch reads FPVYVLGQFLGSFLAAATIYT. Topologically, residues 133-167 are extracellular; the sequence is LFYTAILHFSGGQLMVTGPVATAGIFATYLPDHMT. Residues 168 to 188 traverse the membrane as a helical segment; that stretch reads LWRGFLNEAWLTGMLQLCLFA. Topologically, residues 189-200 are cytoplasmic; the sequence is ITDQENNAALPG. A helical membrane pass occupies residues 201–217; that stretch reads TQALVIGILVVIIGVSL. The Extracellular segment spans residues 218 to 221; it reads GMNT. An intramembrane region (discontinuously helical) is located at residues 222-235; that stretch reads GYAINPSRDLPPRV. Positions 226–228 match the NPA 2 motif; that stretch reads NPS. Topologically, residues 236 to 253 are extracellular; it reads FTFIAGWGKEVFSEGENW. A helical membrane pass occupies residues 254-275; it reads WWVPVVAPLLGACLGGIIYLVF. The Cytoplasmic segment spans residues 276–342; it reads IGSTTPREPL…LHESMALGHF (67 aa).

The protein belongs to the MIP/aquaporin (TC 1.A.8) family. In terms of assembly, homotetramer; each monomer provides an independent glycerol/water pore. Two homotetramers on opposing membranes can dimerize, forming a cell-cell junction. Interacts with PLIN1. In terms of processing, phosphorylation by PKA could prevent the interaction with PLIN1.

It is found in the cell membrane. It localises to the cytoplasmic vesicle membrane. The protein resides in the lipid droplet. It catalyses the reaction glycerol(in) = glycerol(out). The catalysed reaction is H2O(in) = H2O(out). It carries out the reaction urea(in) = urea(out). With respect to regulation, glycerol transport is regulated by pH, with the porin being permeable to glycerol at pH 7.4 but not at pH 5.5. Water permeability, however, is not influenced by pH. In terms of biological role, aquaglyceroporins form homotetrameric transmembrane channels, with each monomer independently mediating glycerol and water transport across the plasma membrane along their osmotic gradient. Could also be permeable to urea. Mediates the efflux of glycerol, formed upon triglyceride hydrolysis, to avoid its accumulation in adipocytes and to make it available to other tissues. In the kidney, mediates the reabsorption of glycerol, preventing its loss in urine, again participating to energy homeostasis. In pancreatic beta cells, it also mediates the efflux of glycerol, regulating its intracellular levels. This chain is Aquaporin-7 (AQP7), found in Macaca fascicularis (Crab-eating macaque).